Reading from the N-terminus, the 637-residue chain is Biosynthetic arginine decarboxylase (637 aa).

Lysine 101 is subject to N6-(pyridoxal phosphate)lysine. 286–296 (FDVGGGLAVDY) contacts substrate.

It belongs to the Orn/Lys/Arg decarboxylase class-II family. SpeA subfamily. Requires Mg(2+) as cofactor. It depends on pyridoxal 5'-phosphate as a cofactor.

It carries out the reaction L-arginine + H(+) = agmatine + CO2. It participates in amine and polyamine biosynthesis; agmatine biosynthesis; agmatine from L-arginine: step 1/1. Functionally, catalyzes the biosynthesis of agmatine from arginine. This Shewanella sediminis (strain HAW-EB3) protein is Biosynthetic arginine decarboxylase.